A 466-amino-acid polypeptide reads, in one-letter code: Argininosuccinate lyase (466 aa).

This sequence belongs to the lyase 1 family. Argininosuccinate lyase subfamily.

It localises to the cytoplasm. The catalysed reaction is 2-(N(omega)-L-arginino)succinate = fumarate + L-arginine. The protein operates within amino-acid biosynthesis; L-arginine biosynthesis; L-arginine from L-ornithine and carbamoyl phosphate: step 3/3. This Microcystis aeruginosa (strain NIES-843 / IAM M-2473) protein is Argininosuccinate lyase.